We begin with the raw amino-acid sequence, 286 residues long: Aquaporin PIP1-3 (286 aa).

M1 is subject to N-acetylmethionine. The segment at 1 to 33 (MEGKEEDVRVGANKFPERQPIGTSAQTDKDYKE) is disordered. Residues 1-54 (MEGKEEDVRVGANKFPERQPIGTSAQTDKDYKEPPPAPFFEPGELSSWSFYRAG) are Cytoplasmic-facing. The helical transmembrane segment at 55–75 (IAEFIATFLFLYITVLTVMGV) threads the bilayer. Over 76–81 (KRAPNM) the chain is Extracellular. The helical transmembrane segment at 82-102 (CASVGIQGIAWAFGGMIFALV) threads the bilayer. Over 103-132 (YCTAGISGGHINPAVTFGLFLARKLSLTRA) the chain is Cytoplasmic. The NPA 1 motif lies at 114–116 (NPA). A helical membrane pass occupies residues 133 to 153 (VFYIVMQCLGAICGAGVVKGF). Over 154-174 (QPNPYQTLGGGANTVAHGYTK) the chain is Extracellular. Residues 175 to 195 (GSGLGAEIIGTFVLVYTVFSA) form a helical membrane-spanning segment. Residues 196 to 208 (TDAKRSARDSHVP) are Cytoplasmic-facing. Residues 209–229 (ILAPLPIGFAVFLVHLATIPI) traverse the membrane as a helical segment. Over 230–256 (TGTGINPARSLGAAIIYNKDHAWDDHW) the chain is Extracellular. The NPA 2 motif lies at 235 to 237 (NPA). Residues 257–277 (IFWVGPFIGAALAALYHQLVI) form a helical membrane-spanning segment. The Cytoplasmic portion of the chain corresponds to 278-286 (RAIPFKSRS). The residue at position 284 (S284) is a Phosphoserine.

This sequence belongs to the MIP/aquaporin (TC 1.A.8) family. PIP (TC 1.A.8.11) subfamily. Expressed in roots, above ground, ripening fruit, flower buds, green siliques and senescing leaves.

Its subcellular location is the cell membrane. In terms of biological role, water channel required to facilitate the transport of water across cell membrane. Its function is impaired by Hg(2+). The protein is Aquaporin PIP1-3 (PIP1-3) of Arabidopsis thaliana (Mouse-ear cress).